A 255-amino-acid polypeptide reads, in one-letter code: Proteasome subunit alpha type-3 (255 aa).

N-acetylserine is present on serine 2. Residues lysine 57, lysine 206, and lysine 230 each carry the N6-acetyllysine modification. Residues serine 243 and serine 250 each carry the phosphoserine modification.

The protein belongs to the peptidase T1A family. In terms of assembly, the 26S proteasome consists of a 20S proteasome core and two 19S regulatory subunits. The 20S proteasome core is a barrel-shaped complex made of 28 subunits that are arranged in four stacked rings. The two outer rings are each formed by seven alpha subunits, and the two inner rings are formed by seven beta subunits. The proteolytic activity is exerted by three beta-subunits PSMB5, PSMB6 and PSMB7. Interacts with AURKB. Interacts with CDKN1A. Interacts with MDM2 and RB1. Interacts with the C-terminus of TBXA2R isoform 2. Interacts with DNAJB2. As to expression, detected in liver (at protein level).

The protein localises to the cytoplasm. Its subcellular location is the nucleus. Functionally, component of the 20S core proteasome complex involved in the proteolytic degradation of most intracellular proteins. This complex plays numerous essential roles within the cell by associating with different regulatory particles. Associated with two 19S regulatory particles, forms the 26S proteasome and thus participates in the ATP-dependent degradation of ubiquitinated proteins. The 26S proteasome plays a key role in the maintenance of protein homeostasis by removing misfolded or damaged proteins that could impair cellular functions, and by removing proteins whose functions are no longer required. Associated with the PA200 or PA28, the 20S proteasome mediates ubiquitin-independent protein degradation. This type of proteolysis is required in several pathways including spermatogenesis (20S-PA200 complex) or generation of a subset of MHC class I-presented antigenic peptides (20S-PA28 complex). Binds to the C-terminus of CDKN1A and thereby mediates its degradation. Negatively regulates the membrane trafficking of the cell-surface thromboxane A2 receptor (TBXA2R) isoform 2. The protein is Proteasome subunit alpha type-3 (Psma3) of Mus musculus (Mouse).